The sequence spans 309 residues: NAD-dependent protein deacylase sirtuin-5B, mitochondrial (309 aa).

The N-terminal 35 residues, 1–35 (MILLPFHTRRLVSHVYCGLKPASQNKGIALEMTRP), are a transit peptide targeting the mitochondrion. Positions 36-306 (SSNLANFREA…PPALARHETE (271 aa)) constitute a Deacetylase sirtuin-type domain. 57 to 76 (GAGVSAESGVPTIIGAGGYW) contributes to the NAD(+) binding site. The substrate site is built by Tyr101 and Arg104. 139–142 (QNID) is a binding site for NAD(+). Catalysis depends on His157, which acts as the Proton acceptor. Zn(2+) is bound by residues Cys165, Cys168, Cys206, and Cys211. Residues 248–250 (GTS), 274–276 (NME), and Cys292 contribute to the NAD(+) site.

This sequence belongs to the sirtuin family. Class III subfamily. Requires Zn(2+) as cofactor.

It localises to the mitochondrion. The protein resides in the cytoplasm. Its subcellular location is the cytosol. The protein localises to the nucleus. The enzyme catalyses N(6)-malonyl-L-lysyl-[protein] + NAD(+) + H2O = 2''-O-malonyl-ADP-D-ribose + nicotinamide + L-lysyl-[protein]. The catalysed reaction is N(6)-succinyl-L-lysyl-[protein] + NAD(+) + H2O = 2''-O-succinyl-ADP-D-ribose + nicotinamide + L-lysyl-[protein]. It carries out the reaction N(6)-glutaryl-L-lysyl-[protein] + NAD(+) + H2O = 2''-O-glutaryl-ADP-D-ribose + nicotinamide + L-lysyl-[protein]. Functionally, NAD-dependent lysine demalonylase, desuccinylase and deglutarylase that specifically removes malonyl, succinyl and glutaryl groups on target proteins. Has weak NAD-dependent protein deacetylase activity; however this activity may not be physiologically relevant in vivo. The sequence is that of NAD-dependent protein deacylase sirtuin-5B, mitochondrial (sirt5-b) from Xenopus laevis (African clawed frog).